The sequence spans 551 residues: Cilia- and flagella-associated protein 45 (551 aa).

Disordered stretches follow at residues 1 to 30 (MPLS…TKAV) and 461 to 489 (RLEE…QQKE). A coiled-coil region spans residues 157–526 (NNNKKLSDLE…IKRKKLEELR (370 aa)).

This sequence belongs to the CFAP45 family. Microtubule inner protein component of sperm flagellar doublet microtubules. Interacts with AK8; dimerization with AK8 may create a cavity at the interface of the dimer that can accommodate AMP. Interacts with CFAP52. Interacts with ENKUR. Directly interacts with DNALI1. Interacts with DNAH11. Interacts with DNAI1. As to expression, expressed in respiratory cells and in sperm (at protein level). Expressed in nasopharyngeal epithelium and trachea.

The protein resides in the cytoplasm. The protein localises to the cytoskeleton. It localises to the cilium axoneme. It is found in the flagellum axoneme. Its subcellular location is the cell projection. The protein resides in the cilium. The protein localises to the flagellum. Its function is as follows. Microtubule inner protein (MIP) part of the dynein-decorated doublet microtubules (DMTs) in cilia axoneme, which is required for motile cilia beating. It is an AMP-binding protein that may facilitate dynein ATPase-dependent ciliary and flagellar beating via adenine nucleotide homeostasis. May function as a donor of AMP to AK8 and hence promote ADP production. The polypeptide is Cilia- and flagella-associated protein 45 (Homo sapiens (Human)).